Here is a 155-residue protein sequence, read N- to C-terminus: Interferon gamma (155 aa).

Positions methionine 1–cysteine 22 are cleaved as a signal peptide. Residues asparagine 38 and asparagine 90 are each glycosylated (N-linked (GlcNAc...) asparagine).

The protein belongs to the type II (or gamma) interferon family. Homodimer. Interacts with IFNGR1 (via extracellular domain); this interaction promotes IFNGR1 dimerization. Released primarily from activated T lymphocytes.

The protein localises to the secreted. In terms of biological role, type II interferon produced by immune cells such as T-cells and NK cells that plays crucial roles in antimicrobial, antiviral, and antitumor responses by activating effector immune cells and enhancing antigen presentation. Primarily signals through the JAK-STAT pathway after interaction with its receptor IFNGR1 to affect gene regulation. Upon IFNG binding, IFNGR1 intracellular domain opens out to allow association of downstream signaling components JAK2, JAK1 and STAT1, leading to STAT1 activation, nuclear translocation and transcription of IFNG-regulated genes. Many of the induced genes are transcription factors such as IRF1 that are able to further drive regulation of a next wave of transcription. Plays a role in class I antigen presentation pathway by inducing a replacement of catalytic proteasome subunits with immunoproteasome subunits. In turn, increases the quantity, quality, and repertoire of peptides for class I MHC loading. Increases the efficiency of peptide generation also by inducing the expression of activator PA28 that associates with the proteasome and alters its proteolytic cleavage preference. Up-regulates as well MHC II complexes on the cell surface by promoting expression of several key molecules such as cathepsins B/CTSB, H/CTSH, and L/CTSL. Participates in the regulation of hematopoietic stem cells during development and under homeostatic conditions by affecting their development, quiescence, and differentiation. The protein is Interferon gamma (Ifng) of Mus musculus (Mouse).